The sequence spans 307 residues: NAD kinase 2 (307 aa).

The active-site Proton acceptor is the Asp77. NAD(+)-binding positions include 77 to 78 (DG), 151 to 152 (NE), Asp181, 192 to 197 (TAYALS), and Asn251.

This sequence belongs to the NAD kinase family. It depends on a divalent metal cation as a cofactor.

The protein resides in the cytoplasm. The enzyme catalyses NAD(+) + ATP = ADP + NADP(+) + H(+). Its function is as follows. Involved in the regulation of the intracellular balance of NAD and NADP, and is a key enzyme in the biosynthesis of NADP. Catalyzes specifically the phosphorylation on 2'-hydroxyl of the adenosine moiety of NAD to yield NADP. The polypeptide is NAD kinase 2 (Thermosynechococcus vestitus (strain NIES-2133 / IAM M-273 / BP-1)).